The following is a 1860-amino-acid chain: Proprotein convertase subtilisin/kexin type 5 (1860 aa).

An N-terminal signal peptide occupies residues 1 to 32 (MGWGSRCCCPGRLDLLCVLALLGGCLLPVCRT). A propeptide spanning residues 33-114 (RVYTNHWAVK…QQVVKKRTKR (82 aa)) is cleaved from the precursor. The Extracellular portion of the chain corresponds to 115 to 1743 (DYDFSRAQST…VRPATEHFKT (1629 aa)). Residues 134–453 (MWYMHCSDNT…FGLMDAEAMV (320 aa)) form the Peptidase S8 domain. Residues aspartate 171 and histidine 212 each act as charge relay system in the active site. 2 N-linked (GlcNAc...) asparagine glycosylation sites follow: asparagine 225 and asparagine 381. Serine 386 functions as the Charge relay system in the catalytic mechanism. Residues 461 to 601 (TVPRQHVCVE…SLVLYGTSVQ (141 aa)) enclose the P/Homo B domain. Positions 519-521 (RGD) match the Cell attachment site motif. 22 FU repeats span residues 630 to 680 (EDYA…GHYH), 683 to 730 (KKRC…GSYQ), 734 to 777 (KNLC…GRYF), 779 to 824 (GQDC…SYYF), 832 to 879 (YKSC…GEYV), 882 to 927 (HGHC…WKFE), 929 to 979 (ENQC…GHYA), 982 to 1028 (GNTC…GEVQ), 1032 to 1077 (YEEC…KTYS), 1079 to 1121 (EVEC…GFYG), 1125 to 1168 (MGEC…KTQE), 1177 to 1221 (LRKL…GTWP), 1225 to 1272 (SGSC…GSYA), 1274 to 1318 (DGIC…RHVA), 1320 to 1363 (KGVC…GFYA), 1365 to 1411 (SRHC…GTYY), 1415 to 1461 (TKEC…SEYW), 1465 to 1510 (APGC…GYYA), 1514 to 1559 (SNRC…GYYA), 1563 to 1610 (TGRC…HYYV), 1614 to 1659 (TQTC…GEYR), and 1665 to 1712 (KFNC…SDPP). The interval 636 to 1727 (CDPECSEVGC…CDCQDTTDEC (1092 aa)) is CRM (Cys-rich motif). Residue asparagine 665 is glycosylated (N-linked (GlcNAc...) asparagine). N-linked (GlcNAc...) asparagine glycans are attached at residues asparagine 752, asparagine 802, and asparagine 852. The PLAC domain maps to 869-913 (MGAICKDGEYVDEHGHCQTCEASCAKCQGPTQEDCTTCPMTRIFD). Asparagine 1014 is a glycosylation site (N-linked (GlcNAc...) asparagine). Residue asparagine 1191 is glycosylated (N-linked (GlcNAc...) asparagine). Asparagine 1290 carries an N-linked (GlcNAc...) asparagine glycan. Asparagine 1497 carries an N-linked (GlcNAc...) asparagine glycan. 2 N-linked (GlcNAc...) asparagine glycosylation sites follow: asparagine 1685 and asparagine 1707. A helical transmembrane segment spans residues 1744–1764 (ALFITSSMMLVLLLGAAVVVW). Residues 1765 to 1860 (KKSRGRVQPA…YDDESYSYYQ (96 aa)) are Cytoplasmic-facing. 2 AC regions span residues 1807 to 1826 (VIEY…IVYM) and 1838 to 1860 (YGLL…SYYQ).

This sequence belongs to the peptidase S8 family. Expressed in T-lymphocytes.

It is found in the secreted. The protein localises to the endomembrane system. In terms of biological role, serine endoprotease that processes various proproteins by cleavage at paired basic amino acids, recognizing the RXXX[KR]R consensus motif. Likely functions in the constitutive and regulated secretory pathways. Plays an essential role in pregnancy establishment by proteolytic activation of a number of important factors such as BMP2, CALD1 and alpha-integrins. The polypeptide is Proprotein convertase subtilisin/kexin type 5 (PCSK5) (Homo sapiens (Human)).